We begin with the raw amino-acid sequence, 238 residues long: Cysteine-rich venom protein (238 aa).

The N-terminal stretch at Met-1–Gly-19 is a signal peptide. Residues Val-38–Tyr-164 enclose the SCP domain. 8 disulfides stabilise this stretch: Cys-75/Cys-153, Cys-92/Cys-165, Cys-148/Cys-162, Cys-184/Cys-191, Cys-187/Cys-196, Cys-200/Cys-233, Cys-209/Cys-227, and Cys-218/Cys-231. The 34-residue stretch at Cys-200–Cys-233 folds into the ShKT domain.

Belongs to the CRISP family. As to expression, expressed by the venom gland.

The protein resides in the secreted. Functionally, blocks contraction of smooth muscle elicited by high potassium-induced depolarization, but does not block caffeine-stimulated contraction. May target voltage-gated calcium channels on smooth muscle. The chain is Cysteine-rich venom protein from Austrelaps superbus (Lowland copperhead snake).